The sequence spans 131 residues: Small ribosomal subunit protein uS11 (131 aa).

This sequence belongs to the universal ribosomal protein uS11 family. Part of the 30S ribosomal subunit. Interacts with proteins S7 and S18. Binds to IF-3.

Functionally, located on the platform of the 30S subunit, it bridges several disparate RNA helices of the 16S rRNA. Forms part of the Shine-Dalgarno cleft in the 70S ribosome. The protein is Small ribosomal subunit protein uS11 of Wigglesworthia glossinidia brevipalpis.